The primary structure comprises 216 residues: Orotate phosphoribosyltransferase (216 aa).

Residue Lys-30 coordinates 5-phospho-alpha-D-ribose 1-diphosphate. Residue 38 to 39 (FF) coordinates orotate. 5-phospho-alpha-D-ribose 1-diphosphate is bound by residues 75–76 (YK), Arg-102, Lys-103, Lys-106, His-108, and 128–136 (DDVITAGTA). Orotate contacts are provided by Thr-132 and Arg-160.

Belongs to the purine/pyrimidine phosphoribosyltransferase family. PyrE subfamily. As to quaternary structure, homodimer. Mg(2+) serves as cofactor.

It carries out the reaction orotidine 5'-phosphate + diphosphate = orotate + 5-phospho-alpha-D-ribose 1-diphosphate. Its pathway is pyrimidine metabolism; UMP biosynthesis via de novo pathway; UMP from orotate: step 1/2. Functionally, catalyzes the transfer of a ribosyl phosphate group from 5-phosphoribose 1-diphosphate to orotate, leading to the formation of orotidine monophosphate (OMP). In Acinetobacter baumannii (strain AB307-0294), this protein is Orotate phosphoribosyltransferase.